A 1097-amino-acid polypeptide reads, in one-letter code: Putative regulator of nonsense transcripts 1 (1097 aa).

Residues serine 42–glutamine 53 are compositionally biased toward low complexity. Residues serine 42 to asparagine 67 are disordered. In terms of domain architecture, Upf1 CH-rich spans threonine 96–asparagine 254. Positions 104, 108, 119, 122, 127, 137, 141, 147, 165, 168, 191, and 195 each coordinate Zn(2+). The interval cysteine 104–histidine 137 is C3H. The CC/SHH/C stretch occupies residues cysteine 119 to cysteine 147. The C4 stretch occupies residues cysteine 165–cysteine 195. ATP contacts are provided by residues glutamine 457, glycine 474 to threonine 481, tyrosine 683, and glutamate 813. The tract at residues glutamine 977–glycine 998 is disordered.

This sequence belongs to the DNA2/NAM7 helicase family.

It is found in the cytoplasm. The protein localises to the P-body. The enzyme catalyses ATP + H2O = ADP + phosphate + H(+). RNA-dependent helicase required for nonsense-mediated decay (NMD) of aberrant mRNAs containing premature stop codons and modulates the expression level of normal mRNAs. The formation of an rent1-rent2-rent3 surveillance complex is believed to activate NMD. The sequence is that of Putative regulator of nonsense transcripts 1 (rent1) from Takifugu rubripes (Japanese pufferfish).